Consider the following 222-residue polypeptide: Ras-related protein Rab-41 (222 aa).

GTP contacts are provided by serine 41, valine 42, glycine 43, lysine 44, threonine 45, serine 46, and threonine 63. Threonine 45 lines the Mg(2+) pocket. Positions 58 to 66 (CACQATVGI) are switch-I. Mg(2+) is bound by residues threonine 63 and aspartate 86. GTP-binding residues include glycine 89, asparagine 144, lysine 145, aspartate 147, serine 174, alanine 175, and lysine 176. The tract at residues 89 to 105 (GQERFHSLIPSYIRDST) is switch-II. Cysteine 222 carries the S-geranylgeranyl cysteine lipid modification.

Belongs to the small GTPase superfamily. Rab family. Requires Mg(2+) as cofactor. In terms of tissue distribution, widely expressed in brain, testis, lung, heart, ovary, colon, kidney, uterus and spleen but not in liver.

It is found in the cytoplasm. It catalyses the reaction GTP + H2O = GDP + phosphate + H(+). With respect to regulation, regulated by guanine nucleotide exchange factors (GEFs) which promote the exchange of bound GDP for free GTP. Regulated by GTPase activating proteins (GAPs) which increase the GTP hydrolysis activity. Inhibited by GDP dissociation inhibitors (GDIs). Functionally, the small GTPases Rab are key regulators of intracellular membrane trafficking, from the formation of transport vesicles to their fusion with membranes. Rabs cycle between an inactive GDP-bound form and an active GTP-bound form that is able to recruit to membranes different sets of downstream effectors directly responsible for vesicle formation, movement, tethering and fusion. RAB41 is required for normal Golgi ribbon organization and ER-to-Golgi trafficking. The chain is Ras-related protein Rab-41 from Homo sapiens (Human).